Here is a 437-residue protein sequence, read N- to C-terminus: U1 small nuclear ribonucleoprotein 70 kDa (437 aa).

Threonine 2 carries the post-translational modification N-acetylthreonine. The tract at residues phenylalanine 48 to glutamine 79 is disordered. Residues alanine 60–glutamine 79 are compositionally biased toward basic and acidic residues. Residues histidine 92–glycine 202 form a required for interaction with U1 RNA region. One can recognise an RRM domain in the interval lysine 103 to glycine 181. Position 118 is an N6-acetyllysine (lysine 118). Tyrosine 126 is subject to Phosphotyrosine. The segment at tryptophan 187–glutamate 437 is disordered. Positions leucine 192 to arginine 201 are enriched in gly residues. The segment covering asparagine 207–arginine 254 has biased composition (basic and acidic residues). Serine 226 and serine 268 each carry phosphoserine. Basic residues predominate over residues arginine 255–serine 268. Basic and acidic residues-rich tracts occupy residues arginine 269 to arginine 286 and arginine 294 to arginine 310. The residue at position 320 (serine 320) is a Phosphoserine. The segment covering proline 343–arginine 393 has biased composition (basic and acidic residues). Lysine 346 is covalently cross-linked (Glycyl lysine isopeptide (Lys-Gly) (interchain with G-Cter in SUMO2)). Serine 410 is modified (phosphoserine).

As to quaternary structure, component of the U1 snRNP. The U1 snRNP is composed of the U1 snRNA and the 7 core Sm proteins SNRPB, SNRPD1, SNRPD2, SNRPD3, SNRPE, SNRPF and SNRPG that assemble in a heptameric protein ring on the Sm site of the small nuclear RNA to form the core snRNP, and at least three U1 snRNP-specific proteins SNRNP70/U1-70K, SNRPA/U1-A and SNRPC/U1-C. Interacts with SCNM1. Found in a pre-mRNA splicing complex with SFRS4, SFRS5, SNRNP70, SNRPA1, SRRM1 and SRRM2. Found in a pre-mRNA exonic splicing enhancer (ESE) complex with SNRNP70, SNRPA1, SRRM1 and TRA2B/SFRS10. Interacts with dephosphorylated SFRS13A and SFPQ. Interacts with NUDT21/CPSF5, CPSF6, SCAF11, and ZRANB2. Interacts with GEMIN5. Interacts with FUS. In terms of processing, the N-terminus is blocked. Extensively phosphorylated on serine residues in the C-terminal region.

The protein resides in the nucleus speckle. It is found in the nucleus. The protein localises to the nucleoplasm. Component of the spliceosomal U1 snRNP, which is essential for recognition of the pre-mRNA 5' splice-site and the subsequent assembly of the spliceosome. SNRNP70 binds to the loop I region of U1-snRNA. Its function is as follows. Truncated isoforms that lack the RRM domain cannot bind U1-snRNA. This chain is U1 small nuclear ribonucleoprotein 70 kDa (SNRNP70), found in Homo sapiens (Human).